The sequence spans 202 residues: LexA repressor (202 aa).

Residues 28 to 48 (RAEIAQRLGFRSPNAAEEHLK) constitute a DNA-binding region (H-T-H motif). Active-site for autocatalytic cleavage activity residues include Ser-119 and Lys-156.

This sequence belongs to the peptidase S24 family. Homodimer.

It catalyses the reaction Hydrolysis of Ala-|-Gly bond in repressor LexA.. Its function is as follows. Represses a number of genes involved in the response to DNA damage (SOS response), including recA and lexA. Binds to the 16 bp palindromic sequence 5'-CTGTATATATATACAG-3'. In the presence of single-stranded DNA, RecA interacts with LexA causing an autocatalytic cleavage which disrupts the DNA-binding part of LexA, leading to derepression of the SOS regulon and eventually DNA repair. This is LexA repressor from Escherichia coli (strain K12 / MC4100 / BW2952).